The primary structure comprises 1252 residues: Putative late blight resistance protein homolog R1B-11 (1252 aa).

A coiled-coil region spans residues R543–Q566. NB-ARC domains follow at residues S684–I736 and S786–G830. LRR repeat units lie at residues F955 to R980, L998 to M1026, L1077 to S1100, F1103 to A1125, F1126 to D1149, L1187 to S1212, and L1213 to A1236. The region spanning V1188–L1252 is the HMA domain.

It belongs to the disease resistance NB-LRR family.

The protein resides in the cytoplasm. Its subcellular location is the membrane. Functionally, confers resistance to late blight (Phytophthora infestans) races carrying the avirulence gene Avr1. Resistance proteins guard the plant against pathogens that contain an appropriate avirulence protein via an indirect interaction with this avirulence protein. That triggers a defense system including the hypersensitive response, which restricts the pathogen growth. In Solanum demissum (Wild potato), this protein is Putative late blight resistance protein homolog R1B-11 (R1B-11).